Consider the following 326-residue polypeptide: GTP 3',8-cyclase (326 aa).

Positions glycine 5 to serine 227 constitute a Radical SAM core domain. Position 14 (arginine 14) interacts with GTP. 2 residues coordinate [4Fe-4S] cluster: cysteine 21 and cysteine 25. Tyrosine 27 provides a ligand contact to S-adenosyl-L-methionine. Cysteine 28 contributes to the [4Fe-4S] cluster binding site. Position 64 (arginine 64) interacts with GTP. Glycine 68 is an S-adenosyl-L-methionine binding site. Threonine 95 lines the GTP pocket. Serine 119 lines the S-adenosyl-L-methionine pocket. Residue lysine 155 participates in GTP binding. Residue methionine 189 participates in S-adenosyl-L-methionine binding. [4Fe-4S] cluster contacts are provided by cysteine 250 and cysteine 253. GTP is bound at residue arginine 255–arginine 257. Cysteine 267 contacts [4Fe-4S] cluster.

This sequence belongs to the radical SAM superfamily. MoaA family. Monomer and homodimer. [4Fe-4S] cluster serves as cofactor.

It catalyses the reaction GTP + AH2 + S-adenosyl-L-methionine = (8S)-3',8-cyclo-7,8-dihydroguanosine 5'-triphosphate + 5'-deoxyadenosine + L-methionine + A + H(+). The protein operates within cofactor biosynthesis; molybdopterin biosynthesis. Functionally, catalyzes the cyclization of GTP to (8S)-3',8-cyclo-7,8-dihydroguanosine 5'-triphosphate. This Sulfurovum sp. (strain NBC37-1) protein is GTP 3',8-cyclase.